Reading from the N-terminus, the 102-residue chain is NADH-quinone oxidoreductase subunit K (102 aa).

3 helical membrane passes run 5-25 (LAHY…GIFL), 31-51 (IILL…FVAF), and 62-82 (VFVF…LAIL).

It belongs to the complex I subunit 4L family. NDH-1 is composed of 14 different subunits. Subunits NuoA, H, J, K, L, M, N constitute the membrane sector of the complex.

Its subcellular location is the cell inner membrane. The catalysed reaction is a quinone + NADH + 5 H(+)(in) = a quinol + NAD(+) + 4 H(+)(out). Functionally, NDH-1 shuttles electrons from NADH, via FMN and iron-sulfur (Fe-S) centers, to quinones in the respiratory chain. The immediate electron acceptor for the enzyme in this species is believed to be ubiquinone. Couples the redox reaction to proton translocation (for every two electrons transferred, four hydrogen ions are translocated across the cytoplasmic membrane), and thus conserves the redox energy in a proton gradient. The chain is NADH-quinone oxidoreductase subunit K from Bordetella petrii (strain ATCC BAA-461 / DSM 12804 / CCUG 43448).